A 202-amino-acid polypeptide reads, in one-letter code: Small ribosomal subunit protein uS4 (202 aa).

The segment at 15 to 42 (LGDLPGLTRKAAKRSYPPGQHGQARRKR) is disordered. The region spanning 90–152 (NRLDNVCFRL…KCSKQLAEGN (63 aa)) is the S4 RNA-binding domain.

It belongs to the universal ribosomal protein uS4 family. Part of the 30S ribosomal subunit. Contacts protein S5. The interaction surface between S4 and S5 is involved in control of translational fidelity.

Functionally, one of the primary rRNA binding proteins, it binds directly to 16S rRNA where it nucleates assembly of the body of the 30S subunit. With S5 and S12 plays an important role in translational accuracy. This is Small ribosomal subunit protein uS4 from Parasynechococcus marenigrum (strain WH8102).